We begin with the raw amino-acid sequence, 108 residues long: Ribulose bisphosphate carboxylase small subunit (108 aa).

Belongs to the RuBisCO small chain family. As to quaternary structure, heterohexadecamer of 8 large and 8 small subunits.

Its function is as follows. RuBisCO catalyzes two reactions: the carboxylation of D-ribulose 1,5-bisphosphate, the primary event in carbon dioxide fixation, as well as the oxidative fragmentation of the pentose substrate. Both reactions occur simultaneously and in competition at the same active site. Although the small subunit is not catalytic it is essential for maximal activity. The protein is Ribulose bisphosphate carboxylase small subunit of Nitrobacter vulgaris.